Here is a 242-residue protein sequence, read N- to C-terminus: UPF0073 membrane protein Rv1085c (242 aa).

7 helical membrane passes run 42 to 62 (VYSA…SWAV), 67 to 87 (AGLT…VSAT), 108 to 128 (SMIF…ALPA), 133 to 153 (VVLS…MCWP), 159 to 179 (VGVP…ATIL), 186 to 206 (ALVL…LYAV), and 222 to 242 (FHAC…FVVF).

This sequence belongs to the UPF0073 (Hly-III) family.

It is found in the cell membrane. This is UPF0073 membrane protein Rv1085c from Mycobacterium tuberculosis (strain ATCC 25618 / H37Rv).